We begin with the raw amino-acid sequence, 497 residues long: Glycerol kinase 2 (497 aa).

T13 lines the ADP pocket. 3 residues coordinate ATP: T13, T14, and S15. Residue T13 coordinates sn-glycerol 3-phosphate. R17 lines the ADP pocket. Sn-glycerol 3-phosphate contacts are provided by R83, E84, Y134, and D241. Residues R83, E84, Y134, D241, and Q242 each coordinate glycerol. 2 residues coordinate ADP: T263 and G305. The ATP site is built by T263, G305, Q309, and G406. 2 residues coordinate ADP: G406 and N410.

It belongs to the FGGY kinase family.

It catalyses the reaction glycerol + ATP = sn-glycerol 3-phosphate + ADP + H(+). Its pathway is polyol metabolism; glycerol degradation via glycerol kinase pathway; sn-glycerol 3-phosphate from glycerol: step 1/1. Functionally, key enzyme in the regulation of glycerol uptake and metabolism. Catalyzes the phosphorylation of glycerol to yield sn-glycerol 3-phosphate. This chain is Glycerol kinase 2, found in Sulfolobus acidocaldarius (strain ATCC 33909 / DSM 639 / JCM 8929 / NBRC 15157 / NCIMB 11770).